Reading from the N-terminus, the 226-residue chain is ATP synthase subunit C lysine N-methyltransferase (226 aa).

Residues 35-55 traverse the membrane as a helical segment; the sequence is VIGGTLVALYAVATPFVAPAL. The required for mitochondrial location stretch occupies residues 48–82; the sequence is TPFVAPALRKLCLPYVPATTTQVKNVLKMLRSRTG.

Belongs to the ANT/ATPSC lysine N-methyltransferase family.

It is found in the mitochondrion membrane. In terms of biological role, mitochondrial protein-lysine N-methyltransferase that promotes chronic pain. Involved in persistent inflammatory and neuropathic pain: methyltransferase activity in the mitochondria of sensory neurons promotes chronic pain via a pathway that depends on the production of reactive oxygen species (ROS) and on the engagement of spinal cord microglia. Protein-lysine N-methyltransferase activity is dependent on S-adenosyl-L-methionine. The protein is ATP synthase subunit C lysine N-methyltransferase (atpsckmt) of Xenopus laevis (African clawed frog).